Reading from the N-terminus, the 416-residue chain is MENIKKNDIEIHDMLVKELKRQRETIELIASENIASQSVMEAQGSCLTNKYAEGYPGKRYYGGCEVVDIAETIAIERAKKLFNARFANVQPHSGAQANFAILLALLKPGDTIMGLSLSHGGHLTHGSPFNVSGKWFNVISYSVSEKTGCIDYNEIESLVLEHKPKLIISGASAYSRIWDWERISGIAKKVSAYHMSDMAHYAGLVAAGIYPSPVGYADITTTTTHKTLRGPRGGLILTNNEELAKKINSAIFPGEQGGPLMHVIAAKAVAFGEALKPEFKEYQKQVLANAKQLAETLEEGKLKIVSGGTDSHMFLVDLRPLNVKGKNAQDTLEKAGITLNKNGIPYDLEKPTMTSGIRIGSPAVTTRGMKEPEMVKIAEAIIKVLKNIDNEKIISEVSTDMLKLCQEFPIYRGLEY.

Residues L117 and 121–123 (GHL) contribute to the (6S)-5,6,7,8-tetrahydrofolate site. Residue K226 is modified to N6-(pyridoxal phosphate)lysine. Position 242 (E242) interacts with (6S)-5,6,7,8-tetrahydrofolate.

This sequence belongs to the SHMT family. In terms of assembly, homodimer. Pyridoxal 5'-phosphate serves as cofactor.

Its subcellular location is the cytoplasm. It carries out the reaction (6R)-5,10-methylene-5,6,7,8-tetrahydrofolate + glycine + H2O = (6S)-5,6,7,8-tetrahydrofolate + L-serine. It participates in one-carbon metabolism; tetrahydrofolate interconversion. The protein operates within amino-acid biosynthesis; glycine biosynthesis; glycine from L-serine: step 1/1. In terms of biological role, catalyzes the reversible interconversion of serine and glycine with tetrahydrofolate (THF) serving as the one-carbon carrier. This reaction serves as the major source of one-carbon groups required for the biosynthesis of purines, thymidylate, methionine, and other important biomolecules. Also exhibits THF-independent aldolase activity toward beta-hydroxyamino acids, producing glycine and aldehydes, via a retro-aldol mechanism. This chain is Serine hydroxymethyltransferase, found in Endomicrobium trichonymphae.